Here is a 333-residue protein sequence, read N- to C-terminus: Probable tRNA pseudouridine synthase B (333 aa).

The active-site Nucleophile is the D71. One can recognise a PUA domain in the interval L238–M313.

It belongs to the pseudouridine synthase TruB family. Type 2 subfamily.

It carries out the reaction uridine(55) in tRNA = pseudouridine(55) in tRNA. In terms of biological role, could be responsible for synthesis of pseudouridine from uracil-55 in the psi GC loop of transfer RNAs. The sequence is that of Probable tRNA pseudouridine synthase B from Pyrobaculum calidifontis (strain DSM 21063 / JCM 11548 / VA1).